Consider the following 190-residue polypeptide: Lipid A acyltransferase PagP (190 aa).

Positions 1–29 (MYVAMIIRKYFLIIALLVMPWLAIPSVSA) are cleaved as a signal peptide. Active-site residues include His-62, Asp-105, and Ser-106.

This sequence belongs to the lipid A palmitoyltransferase family. In terms of assembly, homodimer.

Its subcellular location is the cell outer membrane. The catalysed reaction is a lipid A + a 1,2-diacyl-sn-glycero-3-phosphocholine = a hepta-acyl lipid A + a 2-acyl-sn-glycero-3-phosphocholine. It catalyses the reaction a lipid IVA + a 1,2-diacyl-sn-glycero-3-phosphocholine = a lipid IVB + a 2-acyl-sn-glycero-3-phosphocholine. It carries out the reaction a lipid IIA + a 1,2-diacyl-sn-glycero-3-phosphocholine = a lipid IIB + a 2-acyl-sn-glycero-3-phosphocholine. Its function is as follows. Transfers a fatty acid residue from the sn-1 position of a phospholipid to the N-linked hydroxyfatty acid chain on the proximal unit of lipid A or its precursors. The chain is Lipid A acyltransferase PagP from Salmonella typhi.